A 156-amino-acid chain; its full sequence is Large ribosomal subunit protein eL29 (156 aa).

Positions M1 to S26 are enriched in basic residues. Disordered stretches follow at residues M1–V35 and R116–P156. K5 bears the N6-methyllysine mark. S31 bears the Phosphoserine mark. K33 is modified (N6-acetyllysine). Repeat copies occupy residues A129–K136 and A137–Q144. The interval A129 to Q144 is 2 X 8 AA tandem repeats of A-X-A-K-A-P-A-[KQ]. Residues P134 to P156 show a composition bias toward low complexity.

It belongs to the eukaryotic ribosomal protein eL29 family. As to quaternary structure, component of the large ribosomal subunit.

Its subcellular location is the cytoplasm. Functionally, component of the large ribosomal subunit. The ribosome is a large ribonucleoprotein complex responsible for the synthesis of proteins in the cell. The sequence is that of Large ribosomal subunit protein eL29 (Rpl29) from Rattus norvegicus (Rat).